The following is a 131-amino-acid chain: uncharacterized protein (131 aa).

Over residues 31 to 40 the composition is skewed to low complexity; that stretch reads AAATSRAAPL. The segment at 31–131 is disordered; it reads AAATSRAAPL…EAKTEQTKTP (101 aa).

This is an uncharacterized protein from Homo sapiens (Human).